Reading from the N-terminus, the 719-residue chain is uncharacterized protein (719 aa).

Residues 64–100 (IQNLNQRKEEVIRLIAEQDKLTDNLKRKIEQSVKLQE) are a coiled coil. The S1 motif domain occupies 649–718 (GMELQGTVRN…QKGRVSLSMV (70 aa)).

This is an uncharacterized protein from Bacillus subtilis (strain 168).